Consider the following 199-residue polypeptide: Ribosome maturation factor RimP (199 aa).

Residues 165-199 (AGNLPPQPEDDEDMLADFEIDESEDEEDPETGDVQ) form a disordered region. Acidic residues predominate over residues 172–199 (PEDDEDMLADFEIDESEDEEDPETGDVQ).

Belongs to the RimP family.

The protein resides in the cytoplasm. Functionally, required for maturation of 30S ribosomal subunits. The chain is Ribosome maturation factor RimP from Hyphomonas neptunium (strain ATCC 15444).